The chain runs to 91 residues: Small ribosomal subunit protein bS18 (91 aa).

The protein belongs to the bacterial ribosomal protein bS18 family. In terms of assembly, part of the 30S ribosomal subunit. Forms a tight heterodimer with protein bS6.

Binds as a heterodimer with protein bS6 to the central domain of the 16S rRNA, where it helps stabilize the platform of the 30S subunit. This is Small ribosomal subunit protein bS18 from Gluconacetobacter diazotrophicus (strain ATCC 49037 / DSM 5601 / CCUG 37298 / CIP 103539 / LMG 7603 / PAl5).